Consider the following 551-residue polypeptide: Probable alpha-glucosidase (551 aa).

The active-site Nucleophile is the D212. The Proton donor role is filled by E272.

It belongs to the glycosyl hydrolase 13 family.

It carries out the reaction Hydrolysis of terminal, non-reducing (1-&gt;4)-linked alpha-D-glucose residues with release of alpha-D-glucose.. This is Probable alpha-glucosidase (aglA) from Rhizobium meliloti (strain 1021) (Ensifer meliloti).